The chain runs to 355 residues: Tabersonine 16-O-methyltransferase (355 aa).

Residues 198-201 (IGGG), D222, 222-223 (DL), 242-243 (DM), and K256 each bind S-adenosyl-L-methionine. H260 acts as the Proton acceptor in catalysis.

The protein belongs to the class I-like SAM-binding methyltransferase superfamily. Cation-independent O-methyltransferase family. COMT subfamily. Homodimer. Expressed in leaves and flowers. Detected in stems and roots. In leaves, expressed in epidermal cells.

It localises to the cytoplasm. It catalyses the reaction 16-hydroxytabersonine + S-adenosyl-L-methionine = 16-methoxytabersonine + S-adenosyl-L-homocysteine + H(+). Its pathway is alkaloid biosynthesis; vindoline biosynthesis. Functionally, 16-O-methyltransferase involved in the biosynthesis of vindoline. Highly specific for 16-hydroxytabersonine. No activity with tabersonine, 3-hydroxytyramine, 4-hydroxytyramine, 5-hydroxytryptamine (5HT), 2,3-dihydro-3-hydroxytabersonine, lochnericine, hoerhammericine, 16-hydroxy-2,3-dihydro-3-hydroxytabersonine, 16-hydroxylochnericine, 16-hydroxyhoerhammericine, quercetin, kaempferol and caffeic acid as substrates. The sequence is that of Tabersonine 16-O-methyltransferase from Catharanthus roseus (Madagascar periwinkle).